A 360-amino-acid polypeptide reads, in one-letter code: GDP-mannose transporter (360 aa).

The Cytoplasmic portion of the chain corresponds to 1 to 49 (MSSSETKGRNEEDVAEIKKAIATGAVKDPSNLSAIPPIFVVSGANFSMN). Residues 50–67 (FLLLCIQSSVCCACVFAV) form a helical membrane-spanning segment. Residues 68–84 (KKLGIISFRDFDMKDAK) lie on the Lumenal side of the membrane. Residues 85 to 105 (MWFPISFLLVSVIYTGSKSLQ) form a helical membrane-spanning segment. Residues 106–110 (YLSIP) are Cytoplasmic-facing. The chain crosses the membrane as a helical span at residues 111–131 (VYTIFKNLTIILIAYGEVLWF). The Lumenal portion of the chain corresponds to 132 to 134 (GGR). Residues 135 to 155 (VTALTFVSFIFMVISSIIAAW) form a helical membrane-spanning segment. Over 156–164 (SDVQSALAS) the chain is Cytoplasmic. The helical transmembrane segment at 165–185 (SIPGASSGVSVGAMQSLFGAL) threads the bilayer. A topological domain (lumenal) is located at residue R186. Residues 187–207 (GLNVGYFWMLVNCLTSAAYVL) traverse the membrane as a helical segment. Topologically, residues 208-220 (SMRKRIKSTGFSD) are cytoplasmic. The helical transmembrane segment at 221–241 (WDTMFYNNLLSIPVLAVFSLI) threads the bilayer. Residues 242–260 (AEDWGRENLNRNFPAETRN) are Lumenal-facing. Residues 261–281 (FLLFAIAFSGAAAVGISYTTA) traverse the membrane as a helical segment. Residues 282–291 (WCVRVTSSTT) lie on the Cytoplasmic side of the membrane. Residues 292–312 (YSMVGALNKLPVAASGMLFFG) traverse the membrane as a helical segment. The Lumenal segment spans residues 313–314 (DP). Residues 315 to 335 (VTVGSVSAVGVGFFAGIVYAV) form a helical membrane-spanning segment. The Cytoplasmic segment spans residues 336 to 360 (AKNNQKKNERRQAADAIIPMASRKP).

The protein belongs to the TPT transporter family. SLC35D subfamily. Homooligomer.

It is found in the golgi apparatus membrane. Its subcellular location is the cytoplasmic vesicle membrane. The protein resides in the endoplasmic reticulum membrane. Functionally, involved in the import of GDP-mannose from the cytoplasm into the Golgi lumen. In Coprinopsis cinerea (strain Okayama-7 / 130 / ATCC MYA-4618 / FGSC 9003) (Inky cap fungus), this protein is GDP-mannose transporter (VRG4).